Consider the following 601-residue polypeptide: Deoxyhypusine synthase (601 aa).

NAD(+) contacts are provided by residues 109–113 (ANLMG) and 184–186 (SGG). Residue 189 to 190 (EH) coordinates spermidine. Positions 210–242 (GHVSSTVSSEATAPPKGLQQRAEKPLGTRAAAG) are disordered. A compositionally biased stretch (polar residues) spans 211–220 (HVSSTVSSEA). D398 serves as a coordination point for NAD(+). The disordered stretch occupies residues 411–451 (PAARPAHRKGGPVADENAGNSKELKRSRKASSSSSTSATAV). Positions 440–451 (ASSSSSTSATAV) are enriched in low complexity. Position 489 (G489) interacts with NAD(+). H494 is a binding site for spermidine. Residue 514 to 515 (NG) participates in NAD(+) binding. Spermidine-binding positions include 520–522 (GSD) and 529–535 (EALSWGK). Catalysis depends on K535, which acts as the Nucleophile. 548 to 549 (EV) lines the NAD(+) pocket. Positions 568 to 601 (RRATDDAQPRRKRSSRGARPPQDVSGHSHLCRGE) are disordered.

This sequence belongs to the deoxyhypusine synthase family. As to quaternary structure, homodimer. It depends on NAD(+) as a cofactor.

It carries out the reaction [eIF5A protein]-L-lysine + spermidine = [eIF5A protein]-deoxyhypusine + propane-1,3-diamine. It functions in the pathway protein modification; eIF5A hypusination. N1-guanyl-1,7-diaminoheptane has a small inhibitory effect on activity. Functionally, catalyzes the NAD-dependent oxidative cleavage of spermidine and the subsequent transfer of the butylamine moiety of spermidine to the epsilon-amino group of a specific lysine residue of the eIF-5A precursor protein to form the intermediate deoxyhypusine residue. The chain is Deoxyhypusine synthase from Leishmania donovani.